The following is a 470-amino-acid chain: ATP synthase subunit beta (470 aa).

157 to 164 is an ATP binding site; the sequence is GGAGVGKT.

It belongs to the ATPase alpha/beta chains family. F-type ATPases have 2 components, CF(1) - the catalytic core - and CF(0) - the membrane proton channel. CF(1) has five subunits: alpha(3), beta(3), gamma(1), delta(1), epsilon(1). CF(0) has three main subunits: a(1), b(2) and c(9-12). The alpha and beta chains form an alternating ring which encloses part of the gamma chain. CF(1) is attached to CF(0) by a central stalk formed by the gamma and epsilon chains, while a peripheral stalk is formed by the delta and b chains.

The protein resides in the cell inner membrane. The enzyme catalyses ATP + H2O + 4 H(+)(in) = ADP + phosphate + 5 H(+)(out). Produces ATP from ADP in the presence of a proton gradient across the membrane. The catalytic sites are hosted primarily by the beta subunits. This Geobacter sulfurreducens (strain ATCC 51573 / DSM 12127 / PCA) protein is ATP synthase subunit beta.